The chain runs to 284 residues: Four and a half LIM domains protein 5 (284 aa).

A C4-type zinc finger spans residues 8-32 (CQYCTASLLGKKYVLKDDSLFCVTC). LIM zinc-binding domains lie at 39-100 (NYCE…ECSS), 101-160 (KCFH…KEFA), 161-220 (HYCN…LYAN), and 223-283 (VACS…MDSD).

Interacts with CREM (via the third LIM domain). Interacts (via second LIM domain) with SPAG8.

Its subcellular location is the nucleus. May be involved in the regulation of spermatogenesis. Stimulates CREM transcriptional activity in a phosphorylation-independent manner. In Macaca fascicularis (Crab-eating macaque), this protein is Four and a half LIM domains protein 5 (FHL5).